Here is a 341-residue protein sequence, read N- to C-terminus: Glycerol-3-phosphate dehydrogenase [NAD(P)+] (341 aa).

4 residues coordinate NADPH: Ser11, Trp12, Arg32, and Lys106. Lys106, Gly137, and Thr139 together coordinate sn-glycerol 3-phosphate. Ala141 provides a ligand contact to NADPH. The sn-glycerol 3-phosphate site is built by Lys192, Asp245, Ser255, Arg256, and Asn257. The Proton acceptor role is filled by Lys192. Arg256 contacts NADPH. NADPH is bound by residues Val280 and Glu282.

This sequence belongs to the NAD-dependent glycerol-3-phosphate dehydrogenase family.

The protein localises to the cytoplasm. The enzyme catalyses sn-glycerol 3-phosphate + NAD(+) = dihydroxyacetone phosphate + NADH + H(+). It catalyses the reaction sn-glycerol 3-phosphate + NADP(+) = dihydroxyacetone phosphate + NADPH + H(+). It functions in the pathway membrane lipid metabolism; glycerophospholipid metabolism. In terms of biological role, catalyzes the reduction of the glycolytic intermediate dihydroxyacetone phosphate (DHAP) to sn-glycerol 3-phosphate (G3P), the key precursor for phospholipid synthesis. The chain is Glycerol-3-phosphate dehydrogenase [NAD(P)+] from Exiguobacterium sp. (strain ATCC BAA-1283 / AT1b).